A 224-amino-acid chain; its full sequence is N6-methyladenosine RNA demethylase ALKBH (224 aa).

A Fe2OG dioxygenase domain is found at 93–222 (LAQAAIVNFY…RINLNVRQMR (130 aa)). Fe cation is bound by residues H111, D113, and H178. R213 lines the 2-oxoglutarate pocket.

This sequence belongs to the alkB family. Fe(2+) serves as cofactor.

It catalyses the reaction an N(6)-methyladenosine in mRNA + 2-oxoglutarate + O2 = an adenosine in mRNA + formaldehyde + succinate + CO2. In terms of biological role, RNA demethylase that regulates the stability of mRNAs through an m(6)A-dependent manner. M6A is a modification present at internal sites of mRNAs and some non-coding RNAs and plays a role in mRNA stability and processing. Demethylate m6A at position A1935 within the 3'UTR of transcription factor ZAP1 and plays an important role in C.parasitica development and virulence. Target mRNAs are primarily associated with amino-acid biosynthesis, 2-oxocarboxylic acid metabolism, and ABC transporters, as well as alpha-amino acid metabolism, small-molecule biosynthesis, and the sulfite reductase complex (NADPH). This chain is N6-methyladenosine RNA demethylase ALKBH, found in Cryphonectria parasitica (strain ATCC 38755 / EP155).